Consider the following 510-residue polypeptide: Maturase K (510 aa).

It belongs to the intron maturase 2 family. MatK subfamily.

It is found in the plastid. The protein resides in the chloroplast. Its function is as follows. Usually encoded in the trnK tRNA gene intron. Probably assists in splicing its own and other chloroplast group II introns. The sequence is that of Maturase K from Cestrum elegans (Red cestrum).